Consider the following 274-residue polypeptide: Putative 2-succinyl-6-hydroxy-2,4-cyclohexadiene-1-carboxylate synthase (274 aa).

The AB hydrolase-1 domain occupies 26-259 (AVVCLHGFTG…KAGHTVHVEQ (234 aa)).

The protein belongs to the AB hydrolase superfamily. MenH family. In terms of assembly, monomer.

The catalysed reaction is 5-enolpyruvoyl-6-hydroxy-2-succinyl-cyclohex-3-ene-1-carboxylate = (1R,6R)-6-hydroxy-2-succinyl-cyclohexa-2,4-diene-1-carboxylate + pyruvate. Its pathway is quinol/quinone metabolism; 1,4-dihydroxy-2-naphthoate biosynthesis; 1,4-dihydroxy-2-naphthoate from chorismate: step 3/7. It participates in quinol/quinone metabolism; menaquinone biosynthesis. In terms of biological role, catalyzes a proton abstraction reaction that results in 2,5-elimination of pyruvate from 2-succinyl-5-enolpyruvyl-6-hydroxy-3-cyclohexene-1-carboxylate (SEPHCHC) and the formation of 2-succinyl-6-hydroxy-2,4-cyclohexadiene-1-carboxylate (SHCHC). The chain is Putative 2-succinyl-6-hydroxy-2,4-cyclohexadiene-1-carboxylate synthase from Bacillus subtilis (strain 168).